Consider the following 673-residue polypeptide: Annexin A6 (673 aa).

At alanine 2 the chain carries N-acetylalanine. The residue at position 13 (serine 13) is a Phosphoserine. Annexin repeat units follow at residues 20–91, 92–163, 175–247, 251–322, 363–434, 435–506, 521–595, and 599–670; these read FDAN…NLMR, PLAY…VLLQ, DLVQ…AVVK, STPE…KLCG, FNPD…GLMM, PPAH…SLAT, EDAQ…AIVQ, and NKPL…ALCG. Tyrosine 30 carries the post-translational modification Phosphotyrosine. N6-acetyllysine occurs at positions 63, 68, 75, and 81. A Phosphotyrosine modification is found at tyrosine 201. Residues lysine 306, lysine 370, and lysine 418 each carry the N6-acetyllysine modification. Serine 422 carries the phosphoserine modification. Lysine 483 bears the N6-acetyllysine mark. A Phosphoserine modification is found at serine 537. At lysine 620 the chain carries N6-acetyllysine.

It belongs to the annexin family.

The protein localises to the cytoplasm. The protein resides in the melanosome. In terms of biological role, may associate with CD21. May regulate the release of Ca(2+) from intracellular stores. This chain is Annexin A6 (Anxa6), found in Rattus norvegicus (Rat).